A 266-amino-acid chain; its full sequence is UPF0294 protein YafD (266 aa).

This sequence belongs to the UPF0294 family.

The protein localises to the cytoplasm. This is UPF0294 protein YafD from Salmonella dublin (strain CT_02021853).